The primary structure comprises 90 residues: Small ribosomal subunit protein bS20 (90 aa).

It belongs to the bacterial ribosomal protein bS20 family.

Functionally, binds directly to 16S ribosomal RNA. This is Small ribosomal subunit protein bS20 from Roseiflexus sp. (strain RS-1).